Reading from the N-terminus, the 329-residue chain is Tyrosine--tRNA ligase (329 aa).

Positions 31, 157, 161, 164, and 179 each coordinate L-tyrosine. The short motif at 220–224 is the 'KMSKS' region element; the sequence is KMSKS. Lys223 lines the ATP pocket.

This sequence belongs to the class-I aminoacyl-tRNA synthetase family. TyrS type 4 subfamily. In terms of assembly, homodimer.

Its subcellular location is the cytoplasm. The catalysed reaction is tRNA(Tyr) + L-tyrosine + ATP = L-tyrosyl-tRNA(Tyr) + AMP + diphosphate + H(+). In terms of biological role, catalyzes the attachment of tyrosine to tRNA(Tyr) in a two-step reaction: tyrosine is first activated by ATP to form Tyr-AMP and then transferred to the acceptor end of tRNA(Tyr). In Picrophilus torridus (strain ATCC 700027 / DSM 9790 / JCM 10055 / NBRC 100828 / KAW 2/3), this protein is Tyrosine--tRNA ligase.